A 294-amino-acid polypeptide reads, in one-letter code: Urease accessory protein UreD 1 (294 aa).

A disordered region spans residues 1 to 22 (MALSLDGLPEKPAPAEAPSPPV). Residues 11–21 (KPAPAEAPSPP) are compositionally biased toward pro residues.

The protein belongs to the UreD family. In terms of assembly, ureD, UreF and UreG form a complex that acts as a GTP-hydrolysis-dependent molecular chaperone, activating the urease apoprotein by helping to assemble the nickel containing metallocenter of UreC. The UreE protein probably delivers the nickel.

The protein localises to the cytoplasm. Functionally, required for maturation of urease via the functional incorporation of the urease nickel metallocenter. This is Urease accessory protein UreD 1 from Methylorubrum extorquens (strain PA1) (Methylobacterium extorquens).